Reading from the N-terminus, the 100-residue chain is Urease subunit gamma (100 aa).

It belongs to the urease gamma subunit family. Heterotrimer of UreA (gamma), UreB (beta) and UreC (alpha) subunits. Three heterotrimers associate to form the active enzyme.

Its subcellular location is the cytoplasm. The enzyme catalyses urea + 2 H2O + H(+) = hydrogencarbonate + 2 NH4(+). Its pathway is nitrogen metabolism; urea degradation; CO(2) and NH(3) from urea (urease route): step 1/1. This is Urease subunit gamma from Acinetobacter baumannii (strain AB307-0294).